Here is a 437-residue protein sequence, read N- to C-terminus: Dolichyl-diphosphooligosaccharide--protein glycosyltransferase 48 kDa subunit (437 aa).

An N-terminal signal peptide occupies residues 1-24 (MVNLSRSVALISVFLLPLLSFSFS). Residues 25-414 (VDNPTDRRVL…YERFIPTAYP (390 aa)) lie on the Lumenal side of the membrane. The helical transmembrane segment at 415–435 (YYGACFTTMAGFFVFSFVYLY) threads the bilayer. Over 436–437 (HK) the chain is Cytoplasmic.

It belongs to the DDOST 48 kDa subunit family. In terms of assembly, component of the oligosaccharyltransferase (OST) complex.

The protein localises to the endoplasmic reticulum membrane. The protein operates within protein modification; protein glycosylation. In terms of biological role, subunit of the oligosaccharyl transferase (OST) complex that catalyzes the initial transfer of a defined glycan (Glc(3)Man(9)GlcNAc(2) in eukaryotes) from the lipid carrier dolichol-pyrophosphate to an asparagine residue within an Asn-X-Ser/Thr consensus motif in nascent polypeptide chains, the first step in protein N-glycosylation. N-glycosylation occurs cotranslationally and the complex associates with the Sec61 complex at the channel-forming translocon complex that mediates protein translocation across the endoplasmic reticulum (ER). All subunits are required for a maximal enzyme activity. The protein is Dolichyl-diphosphooligosaccharide--protein glycosyltransferase 48 kDa subunit (OST48) of Arabidopsis thaliana (Mouse-ear cress).